A 172-amino-acid chain; its full sequence is Small t antigen (172 aa).

M1 carries the post-translational modification N-acetylmethionine; by host. Residues 12-75 (ELMDLLGLDR…VKVAHQPDFG (64 aa)) enclose the J domain. Residues 101 to 114 (CATNPSVHCPCLMC) form a C4-type; atypical zinc finger. Residues 120–141 (HRNRKFLRSSPLVWIDCYCFDC) form an H1C3-type; atypical zinc finger.

In terms of assembly, interacts with host PPP2R1A; the interaction inhibits PP2A activity. Interacts with agnoprotein; this interaction prevents agnoprotein dephosphorylation by host PP2A. Interacts with host RBL1 and RBL2. Interacts with SMARCA5. Interacts with SDHB.

It is found in the host cytoplasm. The protein localises to the host nucleus. Functionally, promotes efficient viral genome replication by modulating several host signaling pathways including transport network, interferon production or cell cycle progression. Inhibits host PP2A phosphatase activity and thereby prevents agnoprotein dephosphorylation. Inactivation of PP2A also results in the transactivation of cyclin A and cyclin D1 promoters. In addition, antagonizes the RIGI-mediated IFN response through interaction with E3 ligase TRIM25 leading to the inhibition of 'Lys-63'-linked ubiquitination of RIGI. Inhibits nucleotide excision repair (NER) pathway which leads to DNA strand breaks during DNA replication and micronuclei formation. The protein is Small t antigen of JC polyomavirus (JCPyV).